The chain runs to 308 residues: 4-diphosphocytidyl-2-C-methyl-D-erythritol kinase (308 aa).

Lys-24 is an active-site residue. 118–128 (PVGAGMAGGSA) provides a ligand contact to ATP. Residue Asp-160 is part of the active site.

The protein belongs to the GHMP kinase family. IspE subfamily.

The catalysed reaction is 4-CDP-2-C-methyl-D-erythritol + ATP = 4-CDP-2-C-methyl-D-erythritol 2-phosphate + ADP + H(+). Its pathway is isoprenoid biosynthesis; isopentenyl diphosphate biosynthesis via DXP pathway; isopentenyl diphosphate from 1-deoxy-D-xylulose 5-phosphate: step 3/6. In terms of biological role, catalyzes the phosphorylation of the position 2 hydroxy group of 4-diphosphocytidyl-2C-methyl-D-erythritol. This is 4-diphosphocytidyl-2-C-methyl-D-erythritol kinase from Bifidobacterium adolescentis (strain ATCC 15703 / DSM 20083 / NCTC 11814 / E194a).